The sequence spans 66 residues: Potassium channel toxin alpha-KTx 30.1 (66 aa).

The N-terminal stretch at 1-24 is a signal peptide; the sequence is MNTGFFFFVIMATGLVLTFDTIHA. 3 disulfide bridges follow: Cys30–Cys50, Cys36–Cys55, and Cys40–Cys57.

This sequence belongs to the short scorpion toxin superfamily. Potassium channel inhibitor family. Alpha-KTx 30 subfamily. Expressed by the venom gland.

The protein resides in the secreted. Inhibits Kv1.3/KCNA3 channel (1 uM of the toxin inhibits currents by 64.1%). The polypeptide is Potassium channel toxin alpha-KTx 30.1 (Scorpiops margerisonae (Scorpion)).